The chain runs to 260 residues: Thrombin-like enzyme gloshedobin (260 aa).

An N-terminal signal peptide occupies residues 1 to 18; the sequence is MVLIRVQANLLILQLSYA. A propeptide spanning residues 19 to 24 is cleaved from the precursor; it reads QKSSEL. Residues 25–252 form the Peptidase S1 domain; it reads IIGGDECNIN…TEWIQSIIAG (228 aa). Intrachain disulfides connect Cys-31–Cys-165, Cys-52–Cys-68, Cys-100–Cys-258, Cys-144–Cys-212, Cys-176–Cys-191, and Cys-202–Cys-227. Residues His-67 and Asp-112 each act as charge relay system in the active site. 2 N-linked (GlcNAc...) asparagine glycosylation sites follow: Asn-123 and Asn-124. Residue Ser-206 is the Charge relay system of the active site.

It belongs to the peptidase S1 family. Snake venom subfamily. Monomer. Expressed by the venom gland.

It is found in the secreted. Completely inhibited by PMSF, and N-tosyl-Lphenylalanine chloromethyl ketone (TPCK) and poorly inhibited by benzamidine and derivates. Not inhibited by EDTA, heparin and hirudin. Functionally, thrombin-like snake venom serine protease. The recombinant form clots fibrinogen by cleaving fibrinogen Aalpha chain (FGA), and slowly Bbeta chain (FGB). Has amidolytic activities. The sequence is that of Thrombin-like enzyme gloshedobin from Gloydius shedaoensis (Shedao island pit viper).